We begin with the raw amino-acid sequence, 414 residues long: Probable sugar phosphate/phosphate translocator At1g06470 (414 aa).

Helical transmembrane passes span 72–92, 101–121, 172–192, 197–217, 224–244, 259–279, 303–323, 328–348, and 354–374; these read VLKT…LTLY, LGKF…QAVL, TFAT…AFAF, PSLK…LTVA, FWGF…WCMT, FIFM…LSLL, FLML…YVLV, AVTV…VAVF, and FTWL…LFNW. Residues 106–216 form the EamA domain; sequence APLLMNTIHF…VISAGVLLTV (111 aa).

The protein belongs to the TPT transporter family. TPT (TC 2.A.7.9) subfamily.

It localises to the membrane. This is Probable sugar phosphate/phosphate translocator At1g06470 from Arabidopsis thaliana (Mouse-ear cress).